The chain runs to 682 residues: DNA-directed RNA polymerase subunit beta' (682 aa).

The Zn(2+) site is built by cysteine 69, cysteine 71, cysteine 87, and cysteine 90. Mg(2+)-binding residues include aspartate 489, aspartate 491, and aspartate 493.

This sequence belongs to the RNA polymerase beta' chain family. RpoC1 subfamily. In plastids the minimal PEP RNA polymerase catalytic core is composed of four subunits: alpha, beta, beta', and beta''. When a (nuclear-encoded) sigma factor is associated with the core the holoenzyme is formed, which can initiate transcription. It depends on Mg(2+) as a cofactor. Requires Zn(2+) as cofactor.

The protein localises to the plastid. Its subcellular location is the chloroplast. The catalysed reaction is RNA(n) + a ribonucleoside 5'-triphosphate = RNA(n+1) + diphosphate. In terms of biological role, DNA-dependent RNA polymerase catalyzes the transcription of DNA into RNA using the four ribonucleoside triphosphates as substrates. In Agrostis stolonifera (Creeping bentgrass), this protein is DNA-directed RNA polymerase subunit beta'.